We begin with the raw amino-acid sequence, 580 residues long: Glutamyl-tRNA(Gln) amidotransferase subunit B-2, chloroplastic/mitochondrial (580 aa).

Composition is skewed to low complexity over residues Arg-20–Ser-35 and Ala-42–Val-59. The tract at residues Arg-20–Ala-64 is disordered.

It belongs to the GatB/GatE family. GatB subfamily. Subunit of the heterotrimeric GatCAB amidotransferase (AdT) complex, composed of A, B and C subunits.

Its subcellular location is the mitochondrion. It is found in the plastid. The protein localises to the chloroplast. It carries out the reaction L-glutamyl-tRNA(Gln) + L-glutamine + ATP + H2O = L-glutaminyl-tRNA(Gln) + L-glutamate + ADP + phosphate + H(+). Its function is as follows. Allows the formation of correctly charged Gln-tRNA(Gln) through the transamidation of misacylated Glu-tRNA(Gln) in chloroplasts and mitochondria. The reaction takes place in the presence of glutamine and ATP through an activated gamma-phospho-Glu-tRNA(Gln). This is Glutamyl-tRNA(Gln) amidotransferase subunit B-2, chloroplastic/mitochondrial from Micromonas pusilla (strain CCMP1545) (Picoplanktonic green alga).